We begin with the raw amino-acid sequence, 653 residues long: NADH-ubiquinone oxidoreductase chain 5 (653 aa).

16 consecutive transmembrane segments (helical) span residues 1–21 (MYLV…FFGR), 30–50 (LITS…FFEV), 81–103 (LTVS…SIGY), 120–140 (FTFM…FLGV), 177–197 (FLTI…YSTV), 200–220 (LAPY…LIGA), 241–261 (TPVS…YLLM), 274–294 (LILC…IGLF), 301–319 (VIAY…AIGL), 331–351 (NHAF…HSVS), 365–385 (FLPL…AIPF), 403–423 (FYIS…FTTL), 452–472 (IFIN…GYLT), 511–531 (LLPL…SEFF), 610–630 (GVIT…VFLL), and 631–651 (YLNI…STIN).

The protein belongs to the complex I subunit 5 family.

It localises to the mitochondrion inner membrane. It carries out the reaction a ubiquinone + NADH + 5 H(+)(in) = a ubiquinol + NAD(+) + 4 H(+)(out). Core subunit of the mitochondrial membrane respiratory chain NADH dehydrogenase (Complex I) that is believed to belong to the minimal assembly required for catalysis. Complex I functions in the transfer of electrons from NADH to the respiratory chain. The immediate electron acceptor for the enzyme is believed to be ubiquinone. The sequence is that of NADH-ubiquinone oxidoreductase chain 5 (ND5) from Trichophyton rubrum (Athlete's foot fungus).